Reading from the N-terminus, the 371-residue chain is Cell division control protein 3 (371 aa).

Residues 22–307 (AGIDFNIMTV…DEYKTREIGL (286 aa)) enclose the Septin-type G domain. The G1 motif stretch occupies residues 32–39 (GSNGLGKS). Residues 32–39 (GSNGLGKS), Gly-116, 195–203 (KSDLLSDSE), and Arg-257 contribute to the GTP site. The tract at residues 113–116 (EVDG) is G3 motif. Residues 194-197 (GKSD) are G4 motif.

It belongs to the TRAFAC class TrmE-Era-EngA-EngB-Septin-like GTPase superfamily. Septin GTPase family. Component of the septin complex.

Functionally, septins are GTPases involved in cytokinesis. The septins localize to the site of cleavage and act as a structural scaffold that recruits different components involved in diverse processes at specific stages during the cell cycle. Septins are also involved in cell morphogenesis, chitin deposition, cell cycle regulation, cell compartmentalization and spore wall formation. The chain is Cell division control protein 3 (CDC3) from Encephalitozoon cuniculi (strain GB-M1) (Microsporidian parasite).